Here is a 314-residue protein sequence, read N- to C-terminus: Thymidylate synthase (314 aa).

DUMP is bound by residues Arg-21 and 176 to 177 (RR). The active-site Nucleophile is the Cys-196. Residues 216-219 (RSAD), Asn-227, and 257-259 (HLY) each bind dUMP. Asp-219 provides a ligand contact to (6R)-5,10-methylene-5,6,7,8-tetrahydrofolate. Ser-313 serves as a coordination point for (6R)-5,10-methylene-5,6,7,8-tetrahydrofolate.

The protein belongs to the thymidylate synthase family. Bacterial-type ThyA subfamily. Homodimer.

Its subcellular location is the cytoplasm. The enzyme catalyses dUMP + (6R)-5,10-methylene-5,6,7,8-tetrahydrofolate = 7,8-dihydrofolate + dTMP. It participates in pyrimidine metabolism; dTTP biosynthesis. Its function is as follows. Catalyzes the reductive methylation of 2'-deoxyuridine-5'-monophosphate (dUMP) to 2'-deoxythymidine-5'-monophosphate (dTMP) while utilizing 5,10-methylenetetrahydrofolate (mTHF) as the methyl donor and reductant in the reaction, yielding dihydrofolate (DHF) as a by-product. This enzymatic reaction provides an intracellular de novo source of dTMP, an essential precursor for DNA biosynthesis. The chain is Thymidylate synthase from Listeria monocytogenes serotype 4a (strain HCC23).